We begin with the raw amino-acid sequence, 98 residues long: Small ribosomal subunit protein uS19 (98 aa).

The disordered stretch occupies residues 77-98 (TRTFRGHAGGKAEKGGSAPKRK).

This sequence belongs to the universal ribosomal protein uS19 family.

Protein S19 forms a complex with S13 that binds strongly to the 16S ribosomal RNA. The protein is Small ribosomal subunit protein uS19 of Chlorobium luteolum (strain DSM 273 / BCRC 81028 / 2530) (Pelodictyon luteolum).